Consider the following 206-residue polypeptide: Large ribosomal subunit protein uL4 (206 aa).

The disordered stretch occupies residues 43–78 (ARSGNRKQKDREEVKHTTKKPWRQKGTGRARAGMSS). Positions 49 to 58 (KQKDREEVKH) are enriched in basic and acidic residues. The span at 59 to 70 (TTKKPWRQKGTG) shows a compositional bias: basic residues.

Belongs to the universal ribosomal protein uL4 family. Part of the 50S ribosomal subunit.

Functionally, one of the primary rRNA binding proteins, this protein initially binds near the 5'-end of the 23S rRNA. It is important during the early stages of 50S assembly. It makes multiple contacts with different domains of the 23S rRNA in the assembled 50S subunit and ribosome. In terms of biological role, forms part of the polypeptide exit tunnel. In Cupriavidus pinatubonensis (strain JMP 134 / LMG 1197) (Cupriavidus necator (strain JMP 134)), this protein is Large ribosomal subunit protein uL4.